The chain runs to 520 residues: Ribonuclease Y (520 aa).

Residues 1 to 21 (MEILIIVIAAVVGLALGFAIA) form a helical membrane-spanning segment. In terms of domain architecture, KH spans 210–295 (CVSVFNLESD…EVVKKTRKQI (86 aa)). Positions 336-429 (LLQHSREVAK…VQVCDAISGA (94 aa)) constitute an HD domain.

Belongs to the RNase Y family.

The protein localises to the cell membrane. Endoribonuclease that initiates mRNA decay. The chain is Ribonuclease Y from Christiangramia forsetii (strain DSM 17595 / CGMCC 1.15422 / KT0803) (Gramella forsetii).